Consider the following 387-residue polypeptide: MKKEKADKAQEKETDQRKQAIDAALGQIEKQFGKGSIMRLGADTRMAEMNVVSTGSLDLDIALGIGGFPSGRIVEIYGPESSGKTTLTLSAIAETQKKGGIAAFIDAEHALDPSYAKKLGVNVDDLLVAQPDNGEEALEICESLVRSNAIDLIVIDSVAALVPKAEIEGDMGDSHMGLQARLMSQALRKLTGTISKSNTTVIFINQIRMKIGVMFGSPETTTGGNALKFYASIRLDIRRIETLKEKEEPVGNRVRVKVVKNKCAPPFRQAEFDIMYANGINRESSLIDLAVRHDLVAKAGSWYSYGGEKIGQGKEQVKNFFLENPDIAFKIENQVRDLNSLPLMDQSKIQTREVKSIERDPKETKETKSKQPVSFSTEAEVDIAVGE.

78–85 contributes to the ATP binding site; it reads GPESSGKT. Positions 350-369 are enriched in basic and acidic residues; the sequence is QTREVKSIERDPKETKETKS. The interval 350–387 is disordered; the sequence is QTREVKSIERDPKETKETKSKQPVSFSTEAEVDIAVGE.

The protein belongs to the RecA family.

Its subcellular location is the cytoplasm. Functionally, can catalyze the hydrolysis of ATP in the presence of single-stranded DNA, the ATP-dependent uptake of single-stranded DNA by duplex DNA, and the ATP-dependent hybridization of homologous single-stranded DNAs. It interacts with LexA causing its activation and leading to its autocatalytic cleavage. This Leptospira meyeri protein is Protein RecA.